Reading from the N-terminus, the 336-residue chain is MIEFVIPKKLKVEEEREEKDYYYARFSLSPLERGYAITIGNALRRVLLSSIPSLAIVGVRFIKPEKYHEYDYIEGVKEDILDIILNLKKVQFRVNVTVKGTIKMEVEKKGPGELVAGDIKTPAGIEVANPDLHIATLNSKADLFFEVYAEVGKGFVPVSEREERPDVGWIPIDGVFSPVIKVNFLTENVRVGKRTDYDKLILEIWTKKSIRPEEALRKAADILINHFKIVTEGLPELKISEEYIITSEEEEAEIPAVDHEEENRENLDVYNRKIDELELSVRSLNCLKRAKIETIGDLLSKTEEELLKIKNFGQKSLDEVKEKLKEKFGLELRKGE.

Positions 1 to 234 (MIEFVIPKKL…NHFKIVTEGL (234 aa)) are alpha N-terminal domain (alpha-NTD). The tract at residues 269 to 336 (VYNRKIDELE…KFGLELRKGE (68 aa)) is alpha C-terminal domain (alpha-CTD).

Belongs to the RNA polymerase alpha chain family. Homodimer. The RNAP catalytic core consists of 2 alpha, 1 beta, 1 beta' and 1 omega subunit. When a sigma factor is associated with the core the holoenzyme is formed, which can initiate transcription.

It catalyses the reaction RNA(n) + a ribonucleoside 5'-triphosphate = RNA(n+1) + diphosphate. DNA-dependent RNA polymerase catalyzes the transcription of DNA into RNA using the four ribonucleoside triphosphates as substrates. The chain is DNA-directed RNA polymerase subunit alpha from Thermotoga petrophila (strain ATCC BAA-488 / DSM 13995 / JCM 10881 / RKU-1).